Consider the following 363-residue polypeptide: Adenosine deaminase (363 aa).

Residues His-42 and His-44 each contribute to the Zn(2+) site. A purine D-ribonucleoside-binding positions include 44 to 46 (HLD), Asp-172, and Gly-201. The tract at residues 170 to 184 (IGDTGHRAADIKASA) is gating helix loop; regulates binding affinity for substrates and thus substrate selectivity. His-226 is a binding site for Zn(2+). A purine D-ribonucleoside contacts are provided by Glu-229, His-253, and Asp-310. Asp-310 lines the Zn(2+) pocket.

The protein belongs to the metallo-dependent hydrolases superfamily. Adenosine and AMP deaminases family. It depends on Zn(2+) as a cofactor.

The enzyme catalyses adenosine + H2O + H(+) = inosine + NH4(+). It catalyses the reaction S-methyl-5'-thioadenosine + H2O + H(+) = S-methyl-5'-thioinosine + NH4(+). Its pathway is purine metabolism; purine nucleoside salvage. Inhibited by coformycin and methylthiocoformycin (MT-coformycin). In terms of biological role, catalyzes the hydrolytic deamination of adenosine to produce inosine. Unlike mammalian adenosine deaminases, also catalyzes the deamination of 5'-methylthioadenosine (MTA), a by-product of polyamine biosynthesis, to produce 5'-methylthioinosine (MTI). Plays an essential role in the purine salvage pathway which allows the parasite to use host cell purines for the synthesis of nucleic acids. The polypeptide is Adenosine deaminase (Plasmodium knowlesi).